The chain runs to 338 residues: Anthocyanidin reductase ((2S)-flavan-3-ol-forming) (338 aa).

NADP(+)-binding positions include 18 to 21, Lys48, 87 to 90, and Tyr168; these read TGFV and VATP.

Belongs to the NAD(P)-dependent epimerase/dehydratase family. Dihydroflavonol-4-reductase subfamily. As to expression, expressed in leaves and grape berries.

The catalysed reaction is a (2S,3R)-flavan-3-ol + 2 NADP(+) = an anthocyanidin with a 3-hydroxy group + 2 NADPH + 2 H(+). The enzyme catalyses a (2S,3S)-flavan-3-ol + 2 NADP(+) = an anthocyanidin with a 3-hydroxy group + 2 NADPH + 2 H(+). It participates in secondary metabolite biosynthesis; flavonoid biosynthesis. Functionally, produces the terminal flavan-3-ol monomers required for the formation of proanthocyanidins or condensed tannins in leaves and flowers, as well as in the skin and seeds of developing berries. Behaves as a reductase and as a C-3 epimerase. Catalyzes the double reduction of anthocyanidins, producing a mixture of (2S,3S)- and (2S,3R)-flavan-3-ols. The enzyme catalyzes sequential hydride transfers to C-2 and C-4, respectively and epimerization at C-3 is achieved by tautomerization that occurs between the two hydride transfers. Converts cyanidin, pelargonidin and delphinidin into catechin and epicatechin, afzelechin and epiafzelechin, and gallocatechin and epigallocatechin respectively. The polypeptide is Anthocyanidin reductase ((2S)-flavan-3-ol-forming) (Vitis vinifera (Grape)).